The following is a 477-amino-acid chain: Bile acid transporter (477 aa).

Helical transmembrane passes span 13 to 33 (FVPF…TAVL), 50 to 70 (WISL…GKLG), 83 to 103 (IVIF…IFML), 107 to 127 (FIVG…IVTE), 139 to 159 (LYML…GLIM), 166 to 186 (VMMW…TFSI), 206 to 226 (LVVV…NIGW), 228 to 248 (STAF…LVMV), 272 to 292 (LILF…IVFV), 301 to 321 (IISS…SVII), 333 to 353 (VLTF…LFKA), 359 to 379 (IFAA…TIFM), 381 to 401 (VALS…YGLF), 406 to 426 (APFG…ANIA), and 444 to 464 (ISSI…GIIL).

It belongs to the major facilitator superfamily.

It is found in the cell membrane. It participates in lipid metabolism; bile acid degradation. The chain is Bile acid transporter (baiG) from Clostridium scindens (strain JCM 10418 / VPI 12708).